A 175-amino-acid polypeptide reads, in one-letter code: CDP-archaeol synthase (175 aa).

4 helical membrane-spanning segments follow: residues 41–61, 82–102, 122–142, and 150–170; these read GLFS…WLSF, LIVV…KSFF, FVVG…VSNF, and VIII…FIGV.

It belongs to the CDP-archaeol synthase family. Mg(2+) is required as a cofactor.

Its subcellular location is the cell membrane. It carries out the reaction 2,3-bis-O-(geranylgeranyl)-sn-glycerol 1-phosphate + CTP + H(+) = CDP-2,3-bis-O-(geranylgeranyl)-sn-glycerol + diphosphate. Its pathway is membrane lipid metabolism; glycerophospholipid metabolism. Catalyzes the formation of CDP-2,3-bis-(O-geranylgeranyl)-sn-glycerol (CDP-archaeol) from 2,3-bis-(O-geranylgeranyl)-sn-glycerol 1-phosphate (DGGGP) and CTP. This reaction is the third ether-bond-formation step in the biosynthesis of archaeal membrane lipids. The protein is CDP-archaeol synthase of Methanosarcina mazei (strain ATCC BAA-159 / DSM 3647 / Goe1 / Go1 / JCM 11833 / OCM 88) (Methanosarcina frisia).